A 620-amino-acid polypeptide reads, in one-letter code: Alkaline nuclease (620 aa).

Low complexity predominate over residues 1-10 (MAAAATPGAK). 2 disordered regions span residues 1–122 (MAAA…SASA) and 595–620 (ASRSPGRGPAAADTTSSPPTAGRSSR). The span at 11-23 (RPADPARDPDSPP) shows a compositional bias: basic and acidic residues. Positions 40–49 (RPAPPRPTSP) are enriched in pro residues. The span at 603–620 (PAAADTTSSPPTAGRSSR) shows a compositional bias: low complexity.

This sequence belongs to the herpesviridae alkaline nuclease family. As to quaternary structure, interacts with major DNA-binding protein; this interaction increases the nuclease processivity of the alkaline exonuclease.

Its subcellular location is the host nucleus. It is found in the host cytoplasm. Functionally, plays a role in processing non linear or branched viral DNA intermediates in order to promote the production of mature packaged unit-length linear progeny viral DNA molecules. Exhibits endonuclease and exonuclease activities and accepts both double-stranded and single-stranded DNA as substrate. Exonuclease digestion of DNA is in the 5'-&gt; 3' direction and the products are 5'-monophosphate nucleosides. Additionally, forms a recombinase with the major DNA-binding protein, which displays strand exchange activity. The protein is Alkaline nuclease of Homo sapiens (Human).